We begin with the raw amino-acid sequence, 160 residues long: Large ribosomal subunit protein uL15 (160 aa).

The segment covering 1 to 13 (MKLNELRDNEGAA) has biased composition (basic and acidic residues). The disordered stretch occupies residues 1 to 51 (MKLNELRDNEGAARKKKRVARGPGSGKGKTAGRGIKGQKSRSGVALNGYEG). Over residues 23–35 (PGSGKGKTAGRGI) the composition is skewed to gly residues.

It belongs to the universal ribosomal protein uL15 family. Part of the 50S ribosomal subunit.

In terms of biological role, binds to the 23S rRNA. This is Large ribosomal subunit protein uL15 from Cereibacter sphaeroides (strain ATCC 17025 / ATH 2.4.3) (Rhodobacter sphaeroides).